We begin with the raw amino-acid sequence, 428 residues long: Zinc metalloproteinase nas-27 (428 aa).

A signal peptide spans 1–17 (MQILPIFFPLLITSLHA). The propeptide occupies 18-57 (IPRGRRAVRNRNEGDINSLVGVGQYLYQGDIAVVKSRARR). The Peptidase M12A domain occupies 58-255 (AVIRQKHKKW…SRMNVLYNCH (198 aa)). 6 disulfides stabilise this stretch: C99–C254, C120–C141, C258–C276, C281–C290, C306–C339, and C366–C386. Residue H150 participates in Zn(2+) binding. E151 is an active-site residue. Residues H154 and H160 each contribute to the Zn(2+) site. N181 carries N-linked (GlcNAc...) asparagine glycosylation. Residues 250–291 (VLYNCHERCANTLNRCQQGGYPAPSDCSQCVCPDGFGGNFCE) enclose the EGF-like domain. A CUB domain is found at 306–428 (CGGVLWASET…LDFNIEYRAV (123 aa)). N-linked (GlcNAc...) asparagine glycosylation occurs at N377.

Zn(2+) is required as a cofactor.

It is found in the secreted. Metalloprotease. This Caenorhabditis elegans protein is Zinc metalloproteinase nas-27 (nas-27).